A 491-amino-acid chain; its full sequence is uncharacterized protein (491 aa).

ATP is bound at residue 267 to 274 (GIQGTGKS).

Belongs to the AAA ATPase family. Highly divergent.

The protein resides in the plastid. Its subcellular location is the chloroplast. This is an uncharacterized protein from Gracilaria tenuistipitata var. liui (Red alga).